The sequence spans 328 residues: uncharacterized protein (328 aa).

Coiled coils occupy residues 67 to 190 and 223 to 251; these read FKEQ…VLEE and MAQR…DNMM.

This is an uncharacterized protein from Mus musculus (Mouse).